Consider the following 288-residue polypeptide: L-threonine kinase (288 aa).

Residue 80-90 (PIAKGMASSTA) coordinates ATP.

Belongs to the GHMP kinase family. PduX subfamily.

The protein resides in the cytoplasm. It catalyses the reaction L-threonine + ATP = O-phospho-L-threonine + ADP + H(+). It functions in the pathway cofactor biosynthesis; adenosylcobalamin biosynthesis. The protein operates within polyol metabolism; 1,2-propanediol degradation. Its function is as follows. L-threonine kinase that catalyzes the conversion of L-threonine to L-threonine-O-3-phosphate. Involved in the de novo synthesis of adenosylcobalamin (coenzyme B12) and the assimilation of cobyric acid. In terms of biological role, expression of a cosmid containing the full 21-gene pdu operon in E.coli allows E.coli to grow on 1,2-propanediol (1,2-PD) with the appearance of bacterial microcompartments (BMC) in its cytoplasm. The 1,2-PD-specific bacterial microcompartment (BMC) concentrates low levels of 1,2-PD catabolic enzymes, concentrates volatile reaction intermediates thus enhancing pathway flux and keeps the level of toxic, mutagenic propionaldehyde low. This gene probably benefits from its induction via the Pdu promoter, rather than a physical interaction with the BMC. The chain is L-threonine kinase from Citrobacter freundii.